A 34-amino-acid polypeptide reads, in one-letter code: Photosystem II reaction center protein M (34 aa).

Residues 6–26 (LGAIATALFVFIPCVFLILLY) form a helical membrane-spanning segment.

Belongs to the PsbM family. In terms of assembly, PSII is composed of 1 copy each of membrane proteins PsbA, PsbB, PsbC, PsbD, PsbE, PsbF, PsbH, PsbI, PsbJ, PsbK, PsbL, PsbM, PsbT, PsbX, PsbY, PsbZ, Psb30/Ycf12, peripheral proteins PsbO, CyanoQ (PsbQ), PsbU, PsbV and a large number of cofactors. It forms dimeric complexes.

It localises to the cellular thylakoid membrane. One of the components of the core complex of photosystem II (PSII). PSII is a light-driven water:plastoquinone oxidoreductase that uses light energy to abstract electrons from H(2)O, generating O(2) and a proton gradient subsequently used for ATP formation. It consists of a core antenna complex that captures photons, and an electron transfer chain that converts photonic excitation into a charge separation. This subunit is found at the monomer-monomer interface. The chain is Photosystem II reaction center protein M from Acaryochloris marina (strain MBIC 11017).